A 114-amino-acid chain; its full sequence is UPF0102 protein HPSH_02690 (114 aa).

It belongs to the UPF0102 family.

The sequence is that of UPF0102 protein HPSH_02690 from Helicobacter pylori (strain Shi470).